The primary structure comprises 188 residues: PRA1 family protein 3 (188 aa).

N-acetylmethionine is present on methionine 1. Residues 1–35 (MDVNIAPLRAWDDFFPGSDRFAQPDFRDISKWNNR) are Cytoplasmic-facing. 2 helical membrane passes run 36 to 56 (VVSN…MMIS) and 57 to 77 (VVGF…VLVF). The Cytoplasmic portion of the chain corresponds to 78–93 (TGFVWAAHNKDALRRL). The next 2 membrane-spanning stretches (helical) occupy residues 94–114 (KKRY…FLIS) and 115–135 (MFGG…LMFI). Positions 103 to 117 (MVVMLASYFLISMFG) are required for homodimer formation and heterodimer formation with ARL6IP1. The Cytoplasmic segment spans residues 136–188 (HASLRLRNLKNKLENKMEGIGLKRTPMGIVLDALEQQEEGINRLTDYISKVKE). A targeting to endoplasmic reticulum membrane region spans residues 136-188 (HASLRLRNLKNKLENKMEGIGLKRTPMGIVLDALEQQEEGINRLTDYISKVKE).

The protein belongs to the PRA1 family. As to quaternary structure, homodimer. Heterodimer with ARL6IP1. Forms multimers. Interacts with ARL6. Interacts with prenylated RAB1A and RAB3A. Interacts with SLC1A1/EAAC1. Interacts with RTN2 (via first transmembrane domain). Does not interact with VAMP1, VAMP2 or VAMP3.

It is found in the endoplasmic reticulum membrane. It localises to the cell membrane. The protein resides in the cytoplasm. Its subcellular location is the cytoskeleton. Regulates intracellular concentrations of taurine and glutamate. Negatively modulates SLC1A1/EAAC1 glutamate transport activity by decreasing its affinity for glutamate in a PKC activity-dependent manner. Plays a role in the retention of SLC1A1/EAAC1 in the endoplasmic reticulum. This chain is PRA1 family protein 3 (ARL6IP5), found in Macaca fascicularis (Crab-eating macaque).